The sequence spans 411 residues: UPF0761 membrane protein PA14_51960 (411 aa).

The next 6 membrane-spanning stretches (helical) occupy residues 36–56, 92–112, 132–152, 174–194, 207–229, and 244–264; these read LFAVVPMMTVMFSMLSLIPAF, HLTWVGVVFLAVTAFTMLVTI, FLLYWAILSLGPLLLGAGFAV, LLGLMPLAFSVAAFTLLYSAV, GGVFTAVLFEAAKTLFGLYVSLF, and IFLLWIYLSWMIVLFGAVLVC.

The protein belongs to the UPF0761 family.

The protein localises to the cell inner membrane. The sequence is that of UPF0761 membrane protein PA14_51960 from Pseudomonas aeruginosa (strain UCBPP-PA14).